A 324-amino-acid chain; its full sequence is uncharacterized protein (324 aa).

Belongs to the mgp1/MG371 family.

This is an uncharacterized protein from Mycoplasma genitalium (strain ATCC 33530 / DSM 19775 / NCTC 10195 / G37) (Mycoplasmoides genitalium).